A 113-amino-acid polypeptide reads, in one-letter code: Insulin (113 aa).

The first 24 residues, 1-24, serve as a signal peptide directing secretion; it reads MAALWLQAFSLLVLMMVSWPGSQA. 3 disulfide bridges follow: cysteine 32-cysteine 99, cysteine 44-cysteine 112, and cysteine 98-cysteine 103. The propeptide at 56 to 90 is c peptide; sequence DVDPLLGFLPPKAGGAVVQGGENEVTFKDQMEMMV.

It belongs to the insulin family. As to quaternary structure, heterodimer of a B chain and an A chain linked by two disulfide bonds.

It localises to the secreted. In terms of biological role, insulin decreases blood glucose concentration. It increases cell permeability to monosaccharides, amino acids and fatty acids. It accelerates glycolysis, the pentose phosphate cycle, and glycogen synthesis in liver. The protein is Insulin (ins) of Oreochromis niloticus (Nile tilapia).